The chain runs to 186 residues: ATP synthase subunit delta (186 aa).

This sequence belongs to the ATPase delta chain family. F-type ATPases have 2 components, F(1) - the catalytic core - and F(0) - the membrane proton channel. F(1) has five subunits: alpha(3), beta(3), gamma(1), delta(1), epsilon(1). CF(0) has four main subunits: a(1), b(1), b'(1) and c(10-14). The alpha and beta chains form an alternating ring which encloses part of the gamma chain. F(1) is attached to F(0) by a central stalk formed by the gamma and epsilon chains, while a peripheral stalk is formed by the delta, b and b' chains.

It is found in the cell inner membrane. Functionally, f(1)F(0) ATP synthase produces ATP from ADP in the presence of a proton or sodium gradient. F-type ATPases consist of two structural domains, F(1) containing the extramembraneous catalytic core and F(0) containing the membrane proton channel, linked together by a central stalk and a peripheral stalk. During catalysis, ATP synthesis in the catalytic domain of F(1) is coupled via a rotary mechanism of the central stalk subunits to proton translocation. This protein is part of the stalk that links CF(0) to CF(1). It either transmits conformational changes from CF(0) to CF(1) or is implicated in proton conduction. This Rhodopseudomonas palustris (strain BisB5) protein is ATP synthase subunit delta.